Consider the following 318-residue polypeptide: Acyl-CoA dehydrogenase IpdE2 (318 aa).

Positions 210 and 277 each coordinate FAD.

This sequence belongs to the acyl-CoA dehydrogenase family. In terms of assembly, heterotetramer composed of 2 IpdE1 subunits and 2 IpdE2 subunits. Requires FAD as cofactor.

The enzyme catalyses 3-[(3aS,4S,5R,7aS)-5-hydroxy-7a-methyl-1-oxo-octahydro-1H-inden-4-yl]propanoyl-CoA + A = (2E)-3-[(3aS,4S,5R,7aS)-5-hydroxy-7a-methyl-1-oxo-octahydro-1H-inden-4-yl]prop-2-enoyl-CoA + AH2. Its pathway is steroid metabolism; cholesterol degradation. In terms of biological role, involved in cholesterol degradation. Catalyzes the dehydrogenation of 5OH-HIP-CoA to 5OH-HIPE-CoA. Can also use octanoyl-CoA and dihydroferuloyl-CoA, with lower efficiency. Cannot use 3-oxo-4-pregnene-20-carboxyl-CoA (3-OPC-CoA). This is Acyl-CoA dehydrogenase IpdE2 from Mycobacterium tuberculosis (strain ATCC 25618 / H37Rv).